The chain runs to 499 residues: Phenylalanine--tRNA ligase alpha subunit (499 aa).

L-phenylalanine contacts are provided by residues Thr330, Gln372–Glu374, and Tyr412. Residue Glu414 coordinates Mg(2+). L-phenylalanine is bound at residue Phe438.

It belongs to the class-II aminoacyl-tRNA synthetase family. Phe-tRNA synthetase alpha subunit type 2 subfamily. In terms of assembly, tetramer of two alpha and two beta subunits. It depends on Mg(2+) as a cofactor.

It localises to the cytoplasm. It catalyses the reaction tRNA(Phe) + L-phenylalanine + ATP = L-phenylalanyl-tRNA(Phe) + AMP + diphosphate + H(+). The polypeptide is Phenylalanine--tRNA ligase alpha subunit (frs2) (Schizosaccharomyces pombe (strain 972 / ATCC 24843) (Fission yeast)).